A 467-amino-acid chain; its full sequence is Cytochrome P450 monooxygenase azaI (467 aa).

The N-terminal stretch at Met1–Ala28 is a signal peptide. Residue Cys411 coordinates heme.

The protein belongs to the cytochrome P450 family. Heme is required as a cofactor.

It participates in secondary metabolite biosynthesis. Functionally, cytochrome P450 monooxygenase; part of the gene cluster that mediates the biosynthesis of azaphilones, a class of fungal metabolites characterized by a highly oxygenated pyrano-quinone bicyclic core and exhibiting a broad range of bioactivities. In the first step, the non-reducing polyketide synthase azaA forms the hexaketide precursor from successive condensations of five malonyl-CoA units, presumably with a simple acetyl-CoA starter unit. The reactive polyketide chain then undergoes a PT-mediated C2-C7 cyclization to afford the aromatic ring and is eventually released as an aldehyde through the R-domain. The putative ketoreductase azaE is proposed to catalyze the reduction of the terminal ketone resulting in the early culture product FK17-P2a. The monooxygenase azaH was demonstrated to be the only enzyme required to convert FK17-P2a to azanigerone E. AzaH first hydroxylates the benzaldehyde intermediate FK17-P2a at C4, which triggers the formation of the pyran-ring to afford azanigerone E. In parallel, the 2,4-dimethylhexanoyl chain is synthesized by the HR-PKS azaB and is proposed to be transferred to the C4-hydroxyl of azanigerone E by the acyltransferase azaD directly from the ACP domain of azaB. Alternatively, the 2,4-dimethyl-hexanoyl chain may be offloaded from the HR-PKS as a carboxylic acid and converted to an acyl-CoA by azaF. The resulting acyl-CoA molecule could then be taken up as a substrate by AzaD to form azanigerone B. To yield the carboxylic acid substituent in azanigerone A, the hydroxypropyl side chain of azanigerone B would need to undergo a C-C oxidative cleavage catalyzed by cytochrome P450 AzaI. AzaI is proposed to act on a vicinal diol that leads to a C-C bond scission either through an alkoxyradical intermediate or a peroxy complex. In the biosynthesis of azanigerone A, azanigerone B first undergoes hydroxylation at C10, possibly catalyzed by one of the two FAD-dependent monooxygenases encoded in the cluster, azaG or azaL, resulting in the vicinal diol azanigerone C. Oxidative cleavage of azanigerone C by azaI would yield the corresponding aldehyde derivative of azanigerone A. Finally, the dehydrogenase azaJ is proposed to convert the aldehyde functional group into the carboxylic acid, completing the conversion from azanigerone B to azanigerone A. Alternatively, the oxidation of aldehyde to carboxylic acid may be catalyzed by the same P450 enzyme azaI via consecutive oxidation or by endogenous alcohol dehydrogenase. The sequence is that of Cytochrome P450 monooxygenase azaI from Aspergillus niger (strain ATCC 1015 / CBS 113.46 / FGSC A1144 / LSHB Ac4 / NCTC 3858a / NRRL 328 / USDA 3528.7).